The following is a 196-amino-acid chain: Anthranilate synthase component 2 (196 aa).

Residues 1–195 (MLLLIDNYDS…LNTTRRLETA (195 aa)) enclose the Glutamine amidotransferase type-1 domain. L-glutamine is bound at residue 52–54 (GPC). Cys80 (nucleophile; for GATase activity) is an active-site residue. L-glutamine is bound by residues Gln84 and 130–131 (SL). Residues His169 and Glu171 each act as for GATase activity in the active site.

In terms of assembly, heterotetramer consisting of two non-identical subunits: a beta subunit (TrpG) and a large alpha subunit (TrpE).

It catalyses the reaction chorismate + L-glutamine = anthranilate + pyruvate + L-glutamate + H(+). The protein operates within amino-acid biosynthesis; L-tryptophan biosynthesis; L-tryptophan from chorismate: step 1/5. Part of a heterotetrameric complex that catalyzes the two-step biosynthesis of anthranilate, an intermediate in the biosynthesis of L-tryptophan. In the first step, the glutamine-binding beta subunit (TrpG) of anthranilate synthase (AS) provides the glutamine amidotransferase activity which generates ammonia as a substrate that, along with chorismate, is used in the second step, catalyzed by the large alpha subunit of AS (TrpE) to produce anthranilate. In the absence of TrpG, TrpE can synthesize anthranilate directly from chorismate and high concentrations of ammonia. Participates in the tryptophan-dependent indole-3-acetic acid production, which is a phytohormone released by A.brasilense. In Azospirillum brasilense, this protein is Anthranilate synthase component 2 (trpG).